The sequence spans 291 residues: Pantothenate synthetase (291 aa).

30–37 (MGYLHVGH) contributes to the ATP binding site. The Proton donor role is filled by H37. Residue Q61 coordinates (R)-pantoate. A beta-alanine-binding site is contributed by Q61. 147–150 (GEKD) serves as a coordination point for ATP. Residue Q153 coordinates (R)-pantoate. ATP contacts are provided by residues V176 and 184–187 (CSSR).

It belongs to the pantothenate synthetase family. In terms of assembly, homodimer.

It is found in the cytoplasm. It carries out the reaction (R)-pantoate + beta-alanine + ATP = (R)-pantothenate + AMP + diphosphate + H(+). It participates in cofactor biosynthesis; (R)-pantothenate biosynthesis; (R)-pantothenate from (R)-pantoate and beta-alanine: step 1/1. Functionally, catalyzes the condensation of pantoate with beta-alanine in an ATP-dependent reaction via a pantoyl-adenylate intermediate. The sequence is that of Pantothenate synthetase from Sinorhizobium medicae (strain WSM419) (Ensifer medicae).